Here is a 637-residue protein sequence, read N- to C-terminus: DNA mismatch repair protein MutL (637 aa).

The protein belongs to the DNA mismatch repair MutL/HexB family.

In terms of biological role, this protein is involved in the repair of mismatches in DNA. It is required for dam-dependent methyl-directed DNA mismatch repair. May act as a 'molecular matchmaker', a protein that promotes the formation of a stable complex between two or more DNA-binding proteins in an ATP-dependent manner without itself being part of a final effector complex. The polypeptide is DNA mismatch repair protein MutL (Actinobacillus succinogenes (strain ATCC 55618 / DSM 22257 / CCUG 43843 / 130Z)).